A 249-amino-acid polypeptide reads, in one-letter code: Molybdate/tungstate transport system permease protein WtpB (249 aa).

Over 1-5 (MEKFD) the chain is Cytoplasmic. The chain crosses the membrane as a helical span at residues 6-26 (IAMTVFLVMIFLFIFLPIIYM). Over 27–48 (LSNPGDLNQLLDKEVIEAFKTT) the chain is Extracellular. The ABC transmembrane type-1 domain maps to 45–240 (FKTTLLAGAV…LISIALFALL (196 aa)). A helical transmembrane segment spans residues 49 to 69 (LLAGAVATLIALIFGIPTGYI). The Cytoplasmic segment spans residues 70 to 93 (LARYDFKFKSFVEAVLDLPMAIPH). The chain crosses the membrane as a helical span at residues 94–114 (SVIGIIILSFIYGIDIINFIG). The Extracellular segment spans residues 115-116 (RY). Residues 117-137 (VVDNFWGIVTVYLFVGIPFMV) traverse the membrane as a helical segment. Topologically, residues 138–177 (NSIRDGFLSVDEEIEYVSRTLGASKIRTFFEISLPLIKNN) are cytoplasmic. Residues 178–198 (IISGIILSFARGISEVGAILI) form a helical membrane-spanning segment. The Extracellular portion of the chain corresponds to 199–223 (IAYYPKTVPILIYERFMSFGLDASK). Residues 224–244 (PISVGMILISIALFALLRMFG) traverse the membrane as a helical segment. At 245 to 249 (RMRGR) the chain is on the cytoplasmic side.

Belongs to the binding-protein-dependent transport system permease family. The complex is composed of two ATP-binding proteins (WtpC), two transmembrane proteins (WtpB) and a solute-binding protein (WtpA).

Its subcellular location is the cell membrane. Its function is as follows. Part of the ABC transporter complex WtpABC involved in molybdate/tungstate import. Probably responsible for the translocation of the substrate across the membrane. In Methanocaldococcus jannaschii (strain ATCC 43067 / DSM 2661 / JAL-1 / JCM 10045 / NBRC 100440) (Methanococcus jannaschii), this protein is Molybdate/tungstate transport system permease protein WtpB (wtpB).